The chain runs to 249 residues: 2,3-bisphosphoglycerate-dependent phosphoglycerate mutase (249 aa).

Substrate is bound by residues 9-16, 22-23, arginine 61, 88-91, lysine 99, 115-116, and 184-185; these read RHGQSQWN, TG, ERHY, RR, and GN. The active-site Tele-phosphohistidine intermediate is histidine 10. The active-site Proton donor/acceptor is glutamate 88.

This sequence belongs to the phosphoglycerate mutase family. BPG-dependent PGAM subfamily. As to quaternary structure, homodimer.

The catalysed reaction is (2R)-2-phosphoglycerate = (2R)-3-phosphoglycerate. The protein operates within carbohydrate degradation; glycolysis; pyruvate from D-glyceraldehyde 3-phosphate: step 3/5. Functionally, catalyzes the interconversion of 2-phosphoglycerate and 3-phosphoglycerate. In Xanthomonas oryzae pv. oryzae (strain PXO99A), this protein is 2,3-bisphosphoglycerate-dependent phosphoglycerate mutase.